Reading from the N-terminus, the 40-residue chain is Large ribosomal subunit protein bL36B (40 aa).

It belongs to the bacterial ribosomal protein bL36 family.

This chain is Large ribosomal subunit protein bL36B, found in Clavibacter michiganensis subsp. michiganensis (strain NCPPB 382).